A 479-amino-acid chain; its full sequence is Neuronal acetylcholine receptor subunit alpha-9 (479 aa).

The signal sequence occupies residues 1 to 22 (MNWSHSCISFCWIYFAASRLRA). The Extracellular portion of the chain corresponds to 23-238 (AETADGKYAQ…FTLLLKRRSS (216 aa)). Residue Asn-57 is glycosylated (N-linked (GlcNAc...) asparagine). A disulfide bridge links Cys-155 with Cys-169. N-linked (GlcNAc...) asparagine glycosylation is present at Asn-170. The Na(+) site is built by Ser-191 and Asp-193. Cys-219 and Cys-220 are joined by a disulfide. The next 3 membrane-spanning stretches (helical) occupy residues 239-259 (FYIV…PLSF), 269-289 (VSLG…VAEI), and 303-323 (YIAT…VMNI). The Cytoplasmic segment spans residues 324–457 (HFCGAEARPV…WKKVAKVIDR (134 aa)). The helical transmembrane segment at 458–478 (FFMWIFFIMVFVMTILIIARA) threads the bilayer.

It belongs to the ligand-gated ion channel (TC 1.A.9) family. Acetylcholine receptor (TC 1.A.9.1) subfamily. Alpha-9/CHRNA9 sub-subfamily. Forms homo- or heteropentameric channels in conjunction with CHRNA10. The native outer hair cell receptor is composed of CHRNA9:CHRNA10 heterooligomers. Found in the stoichiometric form (CHRNA9)2:(CHRNA10)3. Post-translationally, N-glycosylated. Expressed in cochlea, keratinocytes, pituitary gland, B-cells and T-cells.

It is found in the synaptic cell membrane. The protein resides in the cell membrane. It catalyses the reaction Ca(2+)(in) = Ca(2+)(out). It carries out the reaction K(+)(in) = K(+)(out). The enzyme catalyses Na(+)(in) = Na(+)(out). The catalysed reaction is Mg(2+)(in) = Mg(2+)(out). Its activity is regulated as follows. Activated by a myriad of ligands such as acetylcholine. AChR activity is inhibited by the antagonist alpha-conotoxins RgIA and GeXXA, small disulfide-constrained peptides from cone snails. Component of neuronal acetylcholine receptors (nAChRs) that function as pentameric, ligand-gated cation channels with high calcium permeability among other activities. nAChRs are excitatory neurotrasnmitter receptors formed by a collection of nAChR subunits known to mediate synaptic transmission in the nervous system and the neuromuscular junction. Each nAchR subunit confers differential attributes to channel properties, including activation, deactivation and desensitization kinetics, pH sensitivity, cation permeability, and binding to allosteric modulators. Forms either homopentamers or heteropentamers with CHRNA10. Expressed in the inner ear, in sympathetic neurons and in other non-neuronal cells, such as skin keratinocytes and lymphocytes. nAChR formed by CHRNA9:CHRNA10 mediate central nervous system control of auditory and vestibular sensory processing. The channel is permeable to a range of divalent cations including calcium, the influx of which may activate a potassium current which hyperpolarizes the cell membrane. In the ear, mediates synaptic transmission between efferent olivocochlear fibers and hair cells of the cochlea, this may lead to a reduction in basilar membrane motion, altering the activity of auditory nerve fibers and reducing the range of dynamic hearing. This may protect against acoustic trauma. May also regulate keratinocyte adhesion. This Homo sapiens (Human) protein is Neuronal acetylcholine receptor subunit alpha-9.